A 277-amino-acid chain; its full sequence is Nickel import ATP-binding protein NikE (277 aa).

An ABC transporter domain is found at 14–253; it reads YRTVSLVGRS…EHPASRALQR (240 aa). ATP is bound at residue 46-53; sequence GRSGSGKS.

It belongs to the ABC transporter superfamily. Nickel importer (TC 3.A.1.5.3) family. The complex is composed of two ATP-binding proteins (NikD and NikE), two transmembrane proteins (NikB and NikC) and a solute-binding protein (NikA).

Its subcellular location is the cell inner membrane. The catalysed reaction is Ni(2+)(out) + ATP + H2O = Ni(2+)(in) + ADP + phosphate + H(+). Part of the ABC transporter complex NikABCDE involved in nickel import. Responsible for energy coupling to the transport system. The protein is Nickel import ATP-binding protein NikE of Rhodospirillum rubrum (strain ATCC 11170 / ATH 1.1.1 / DSM 467 / LMG 4362 / NCIMB 8255 / S1).